Here is a 206-residue protein sequence, read N- to C-terminus: Large ribosomal subunit protein bL25 (206 aa).

The tract at residues 168-206 (DPEESVVTVEVPEDASESTAAPEAAAPAADAAAPAADAK) is disordered. Residues 184 to 206 (ESTAAPEAAAPAADAAAPAADAK) are compositionally biased toward low complexity.

The protein belongs to the bacterial ribosomal protein bL25 family. CTC subfamily. As to quaternary structure, part of the 50S ribosomal subunit; part of the 5S rRNA/L5/L18/L25 subcomplex. Contacts the 5S rRNA. Binds to the 5S rRNA independently of L5 and L18.

In terms of biological role, this is one of the proteins that binds to the 5S RNA in the ribosome where it forms part of the central protuberance. In Bifidobacterium longum (strain DJO10A), this protein is Large ribosomal subunit protein bL25.